A 341-amino-acid polypeptide reads, in one-letter code: ATEELKEFFAKARAGSVRLIKVVIEDEQLVLGASQEPVGRWDRDYDRAVLPLLDAQQPCYLLYRLDSQNAQGFEWLFLAWSPDNSPVRLKMLYAATRATVKKEFGGGHIKDELFGTVKDDLSFAGYQKHLSSCAAPAPLTSAERELQQIRINEVKTEISVESKHQTLQGLAFPLQPEAQRALQQLKQKMVNYIQMKLDLERETIELVHTESTDVAQLPSRVPRDAARYHFFLYKHTHEGDLLESVVFIYSMPGYKCSIEERMLYSSCKSRLLDSVEQDFHLEIAKKIEIGDGAELTAEFLYDEVHPKQHAFKQAFAKPKGPGGKRGHKRLIRGPGENGDDS.

2 ADF-H domains span residues 1–131 and 169–305; these read ATEE…KHLS and GLAF…DEVH. Lys6 bears the N6-acetyllysine mark. Tyr301 is subject to Phosphotyrosine. Residues 314 to 341 are disordered; that stretch reads AFAKPKGPGGKRGHKRLIRGPGENGDDS. The segment covering 322-331 has biased composition (basic residues); sequence GGKRGHKRLI. The residue at position 341 (Ser341) is a Phosphoserine.

It belongs to the actin-binding proteins ADF family. Twinfilin subfamily. As to quaternary structure, interacts with G-actin; ADP-actin form and capping protein (CP). May also be able to interact with TWF1 and phosphoinositides, PI(4,5)P2. When bound to PI(4,5)P2, it is down-regulated. Interacts with MYO7A. Post-translationally, phosphorylated on both serine and threonine residues.

It is found in the cytoplasm. The protein localises to the cytoskeleton. Its subcellular location is the perinuclear region. It localises to the cell projection. The protein resides in the stereocilium. Actin-binding protein involved in motile and morphological processes. Inhibits actin polymerization, likely by sequestering G-actin. By capping the barbed ends of filaments, it also regulates motility. Seems to play an important role in clathrin-mediated endocytosis and distribution of endocytic organelles. May play a role in regulating the mature length of the middle and short rows of stereocilia. In Pongo abelii (Sumatran orangutan), this protein is Twinfilin-2 (TWF2).